The sequence spans 348 residues: 3-isopropylmalate dehydrogenase (348 aa).

76 to 87 contributes to the NAD(+) binding site; sequence GPKWTDPNNRPE. Positions 94, 104, 132, and 217 each coordinate substrate. Positions 217, 241, and 245 each coordinate Mg(2+). 275 to 287 is a binding site for NAD(+); it reads GSAPDIAGKNVAN.

Belongs to the isocitrate and isopropylmalate dehydrogenases family. LeuB type 1 subfamily. Homodimer. Mg(2+) is required as a cofactor. It depends on Mn(2+) as a cofactor.

The protein localises to the cytoplasm. The enzyme catalyses (2R,3S)-3-isopropylmalate + NAD(+) = 4-methyl-2-oxopentanoate + CO2 + NADH. The protein operates within amino-acid biosynthesis; L-leucine biosynthesis; L-leucine from 3-methyl-2-oxobutanoate: step 3/4. Its function is as follows. Catalyzes the oxidation of 3-carboxy-2-hydroxy-4-methylpentanoate (3-isopropylmalate) to 3-carboxy-4-methyl-2-oxopentanoate. The product decarboxylates to 4-methyl-2 oxopentanoate. In Staphylococcus aureus (strain MRSA252), this protein is 3-isopropylmalate dehydrogenase.